The sequence spans 342 residues: Dihydroorotase (342 aa).

Positions 13 and 15 each coordinate Zn(2+). Substrate-binding positions include 15-17 and Asn-41; that span reads HLR. Zn(2+)-binding residues include Lys-98, His-135, and His-173. Lys-98 bears the N6-carboxylysine mark. His-135 provides a ligand contact to substrate. Leu-218 is a substrate binding site. Asp-246 lines the Zn(2+) pocket. Residue Asp-246 is part of the active site. 2 residues coordinate substrate: His-250 and Ala-262.

Belongs to the metallo-dependent hydrolases superfamily. DHOase family. Class II DHOase subfamily. In terms of assembly, homodimer. The cofactor is Zn(2+).

The enzyme catalyses (S)-dihydroorotate + H2O = N-carbamoyl-L-aspartate + H(+). Its pathway is pyrimidine metabolism; UMP biosynthesis via de novo pathway; (S)-dihydroorotate from bicarbonate: step 3/3. Its function is as follows. Catalyzes the reversible cyclization of carbamoyl aspartate to dihydroorotate. This is Dihydroorotase from Aliivibrio fischeri (strain MJ11) (Vibrio fischeri).